The chain runs to 268 residues: Undecaprenyl-diphosphatase (268 aa).

A run of 6 helical transmembrane segments spans residues 39-59 (SETFNIFIQLGAVLAVCLIYK), 75-95 (LPYFLKLSVAFIITSILGLWV), 106-126 (LGPVIIAIFGGAFWIYFTEKV), 179-199 (TEFAFLLGIPTMFAASLFAWI), 214-234 (LTLATGFCVSAVVAFISVKWL), and 243-263 (FIPFVWYRVGLGFFLIALVAL).

Belongs to the UppP family.

Its subcellular location is the cell inner membrane. It catalyses the reaction di-trans,octa-cis-undecaprenyl diphosphate + H2O = di-trans,octa-cis-undecaprenyl phosphate + phosphate + H(+). In terms of biological role, catalyzes the dephosphorylation of undecaprenyl diphosphate (UPP). Confers resistance to bacitracin. This is Undecaprenyl-diphosphatase from Methylacidiphilum infernorum (isolate V4) (Methylokorus infernorum (strain V4)).